Consider the following 801-residue polypeptide: METMLKSNPQMQQRNNHSGQETSLWSSGFGMKMEAITPFLGKYRPFMGRCCQTCTPKSWESLFHRSIMDLGFCNVILVKEENTRFRGWLVRRLCYFLWSLEQHIPTSSDASQMIMENTGVQNILLGKVPGAAGEGQAPDLVKKEVQRILGHIQTTPRPFLLRLFSWALLWFLNRLFLNVQLHKGQMKMVHKAAQEGSPLVFLSTHKSLLDGFLLPFVLFSQGLGVLRVALDSRTCSPALRALLRKLGGLFLPPEANLSLDSSEGILARAVVRATVEQLLTSGQPLLIFLEEAPGYPGPRLSALGQAWLGLVVQAVQAGIVPDATLVPVATAYDLVPDAPCNMTHDLAPLGLWTGALAIFRRLCNCWGCNRRVCVRVHLAQPFSLQEYTINARSCWGSRQTLEHLLQPIVLGECSVVPDTEKEQEWTPPTSLLLALKEEDQLLVRRLSRHVLSASVASSAVMSTAIMATLLLLKHQKGVVLSQLLGEFSWLTEETLLRGFDVGFSGQLRCLAQHTLSLLRAHVVLLRVHQGDLVVVPRPGPGLTHLARLSMELLPTFLSEAVGACAVRGLLAGRVPPEGPWELQGIELLSQNELYRQILLLLHLLPQDLLLPQPCQSSYCYCQEVLDRLIQCGLLVAEETPGSRPACDTGRQHLSAKLLWKPSGDFTDSESDDFEEPGGRCFRLSQQSRCPDFFLFLCRLLSPILKAFAQAATFLHLGQLPDSEVGYSEKLLQFLQACAQEEGIFECADPNLAISAIWTFKDLGVLQQIPSPTGPQLHLSPTFASRDNQDKLEQFIRQFICS.

Residues 1–24 are disordered; it reads METMLKSNPQMQQRNNHSGQETSL. Topologically, residues 1–305 are cytoplasmic; that stretch reads METMLKSNPQ…PGPRLSALGQ (305 aa). An acyltransferase region spans residues 180–290; sequence QLHKGQMKMV…SGQPLLIFLE (111 aa). The short motif at 205–210 is the HXXXXD motif element; that stretch reads HKSLLD. A helical transmembrane segment spans residues 306-332; sequence AWLGLVVQAVQAGIVPDATLVPVATAY. Over 333 to 449 the chain is Mitochondrial intermembrane; the sequence is DLVPDAPCNM…QLLVRRLSRH (117 aa). Residues 450-472 traverse the membrane as a helical segment; sequence VLSASVASSAVMSTAIMATLLLL. Residues 473 to 795 lie on the Cytoplasmic side of the membrane; that stretch reads KHQKGVVLSQ…DNQDKLEQFI (323 aa).

It belongs to the GPAT/DAPAT family. In terms of assembly, interacts with PIWIL2. In terms of tissue distribution, expressed in spermatocytes and spermatides.

It is found in the mitochondrion outer membrane. It carries out the reaction sn-glycerol 3-phosphate + an acyl-CoA = a 1-acyl-sn-glycero-3-phosphate + CoA. It catalyses the reaction a 1-acyl-sn-glycero-3-phosphate + an acyl-CoA = a 1,2-diacyl-sn-glycero-3-phosphate + CoA. The enzyme catalyses 1-(9Z-octadecenoyl)-sn-glycero-3-phosphate + (9Z)-octadecenoyl-CoA = 1,2-di-(9Z-octadecenoyl)-sn-glycero-3-phosphate + CoA. The catalysed reaction is 1-(9Z-octadecenoyl)-sn-glycero-3-phosphate + (5Z,8Z,11Z,14Z)-eicosatetraenoyl-CoA = 1-(9Z)-octadecenoyl-2-(5Z,8Z,11Z,14Z)-eicosatetraenoyl-sn-glycero-3-phosphate + CoA. It carries out the reaction (5Z,8Z,11Z,14Z)-eicosatetraenoyl-CoA + sn-glycerol 3-phosphate = 1-(5Z,8Z,11Z,14Z-eicosatetraenoyl)-sn-glycero-3-phosphate + CoA. The protein operates within phospholipid metabolism; CDP-diacylglycerol biosynthesis; CDP-diacylglycerol from sn-glycerol 3-phosphate: step 1/3. With respect to regulation, inhibited by N-ethylmaleimide (NEM). Its function is as follows. Transfers an acyl-group from acyl-ACP to the sn-1 position of glycerol-3-phosphate producing a lysophosphatidic acid (LPA), an essential step for the triacylglycerol (TAG) and glycerophospholipids. In vitro also transfers an acyl-group from acyl-ACP to the LPA producing a phosphatidic acid (PA). Prefers arachidonoyl-CoA as the acyl donor. Required for primary processing step during piRNA biosynthesis. Molecular mechanisms by which it promotes piRNA biosynthesis are unclear and do not involve its acyltransferase activity. This is Glycerol-3-phosphate acyltransferase 2, mitochondrial from Rattus norvegicus (Rat).